The following is a 358-amino-acid chain: G-protein coupled receptor 20 (358 aa).

Residues 1–48 lie on the Extracellular side of the membrane; sequence MPSVSPAGPSAGAVPNATAVTTVRTNASGLEVPLFHLFARLDEELHGT. 2 N-linked (GlcNAc...) asparagine glycosylation sites follow: Asn-16 and Asn-26. The chain crosses the membrane as a helical span at residues 49–69; it reads FPGLWLALMAVHGAIFLAGLV. The Cytoplasmic segment spans residues 70-86; sequence LNGLALYVFCCRTRAKT. A helical transmembrane segment spans residues 87 to 107; that stretch reads PSVIYTINLVVTDLLVGLSLP. Residues 108–125 lie on the Extracellular side of the membrane; the sequence is TRFAVYYGARGCLRCAFP. The helical transmembrane segment at 126 to 146 threads the bilayer; that stretch reads HVLGYFLNMHCSILFLTCICV. Residues 147–168 lie on the Cytoplasmic side of the membrane; it reads DRYLAIVRPEGSRRCRQPACAR. Residues 169–189 form a helical membrane-spanning segment; that stretch reads AVCAFVWLAAGAVTLSVLGVT. Residues 190–196 are Extracellular-facing; sequence GSRPCCR. A helical transmembrane segment spans residues 197 to 217; the sequence is VFALTVLEFLLPLLVISVFTG. Residues 218 to 238 lie on the Cytoplasmic side of the membrane; that stretch reads RIMCALSRPGLLHQGRQRRVR. A helical transmembrane segment spans residues 239-259; sequence AMQLLLTVLIIFLVCFTPFHA. Over 260-275 the chain is Extracellular; the sequence is RQVAVALWPDMPHHTS. The chain crosses the membrane as a helical span at residues 276–296; that stretch reads LVVYHVAVTLSSLNSCMDPIV. At 297–358 the chain is on the cytoplasmic side; sequence YCFVTSGFQA…TQALANGPEA (62 aa). The tract at residues 315–339 is disordered; it reads HGEREPSSGDVVSMHRSSKGSGRHH. The segment covering 330 to 339 has biased composition (basic residues); sequence RSSKGSGRHH.

It belongs to the G-protein coupled receptor 1 family. As to expression, ubiquitous with highest levels in intestinal tissues. In the brain detected in thalamus, putamen, and caudate, but not in frontal cortex, pons and hypothalamus.

The protein resides in the cell membrane. In terms of biological role, orphan receptor with constitutive G(i) signaling activity that activate cyclic AMP. The protein is G-protein coupled receptor 20 (GPR20) of Homo sapiens (Human).